The sequence spans 277 residues: Thiazole synthase (277 aa).

Lys119 (schiff-base intermediate with DXP) is an active-site residue. 1-deoxy-D-xylulose 5-phosphate is bound by residues Gly180, 206 to 207 (AG), and 228 to 229 (NT).

It belongs to the ThiG family. Homotetramer. Forms heterodimers with either ThiH or ThiS.

It localises to the plastid. The protein localises to the chloroplast. The enzyme catalyses [ThiS sulfur-carrier protein]-C-terminal-Gly-aminoethanethioate + 2-iminoacetate + 1-deoxy-D-xylulose 5-phosphate = [ThiS sulfur-carrier protein]-C-terminal Gly-Gly + 2-[(2R,5Z)-2-carboxy-4-methylthiazol-5(2H)-ylidene]ethyl phosphate + 2 H2O + H(+). The protein operates within cofactor biosynthesis; thiamine diphosphate biosynthesis. Catalyzes the rearrangement of 1-deoxy-D-xylulose 5-phosphate (DXP) to produce the thiazole phosphate moiety of thiamine. Sulfur is provided by the thiocarboxylate moiety of the carrier protein ThiS. In vitro, sulfur can be provided by H(2)S. This is Thiazole synthase from Porphyra purpurea (Red seaweed).